The chain runs to 189 residues: Elongation factor P (189 aa).

This sequence belongs to the elongation factor P family.

It localises to the cytoplasm. The protein operates within protein biosynthesis; polypeptide chain elongation. Involved in peptide bond synthesis. Stimulates efficient translation and peptide-bond synthesis on native or reconstituted 70S ribosomes in vitro. Probably functions indirectly by altering the affinity of the ribosome for aminoacyl-tRNA, thus increasing their reactivity as acceptors for peptidyl transferase. In Pseudomonas syringae pv. syringae (strain B728a), this protein is Elongation factor P.